We begin with the raw amino-acid sequence, 231 residues long: Ribonuclease 3 (231 aa).

Residues 5 to 134 (QKKLKNDYGL…FLGALFIDQG (130 aa)) form the RNase III domain. Glu47 is a binding site for Mg(2+). Asp51 is an active-site residue. Residues Asn120 and Glu123 each coordinate Mg(2+). The active site involves Glu123. Residues 160-229 (DYKTELQEVL…AENAIKGQNH (70 aa)) form the DRBM domain.

The protein belongs to the ribonuclease III family. Homodimer. Mg(2+) is required as a cofactor.

It is found in the cytoplasm. The catalysed reaction is Endonucleolytic cleavage to 5'-phosphomonoester.. Digests double-stranded RNA. Involved in the processing of primary rRNA transcript to yield the immediate precursors to the large and small rRNAs (23S and 16S). Processes some mRNAs, and tRNAs when they are encoded in the rRNA operon. Processes pre-crRNA and tracrRNA of type II CRISPR loci if present in the organism. The chain is Ribonuclease 3 from Lactococcus lactis subsp. cremoris (strain MG1363).